The chain runs to 397 residues: F-box protein At3g49450 (397 aa).

The region spanning 26–75 is the F-box domain; that stretch reads GENSGTLPTDLMVEILSRVPAKSAARFRCVSNDWNSLLRSPYLTNLFLKR.

The polypeptide is F-box protein At3g49450 (Arabidopsis thaliana (Mouse-ear cress)).